A 379-amino-acid polypeptide reads, in one-letter code: 1-deoxy-D-xylulose 5-phosphate reductoisomerase (379 aa).

T10, G11, S12, I13, R38, N39, and N121 together coordinate NADPH. Residue K122 coordinates 1-deoxy-D-xylulose 5-phosphate. E123 is an NADPH binding site. D147 is a binding site for Mn(2+). S148, E149, S173, and H196 together coordinate 1-deoxy-D-xylulose 5-phosphate. E149 is a binding site for Mn(2+). G202 serves as a coordination point for NADPH. Residues S209, N214, K215, and E218 each contribute to the 1-deoxy-D-xylulose 5-phosphate site. E218 is a binding site for Mn(2+).

This sequence belongs to the DXR family. The cofactor is Mg(2+). Mn(2+) serves as cofactor.

The catalysed reaction is 2-C-methyl-D-erythritol 4-phosphate + NADP(+) = 1-deoxy-D-xylulose 5-phosphate + NADPH + H(+). The protein operates within isoprenoid biosynthesis; isopentenyl diphosphate biosynthesis via DXP pathway; isopentenyl diphosphate from 1-deoxy-D-xylulose 5-phosphate: step 1/6. Functionally, catalyzes the NADPH-dependent rearrangement and reduction of 1-deoxy-D-xylulose-5-phosphate (DXP) to 2-C-methyl-D-erythritol 4-phosphate (MEP). This Chlamydia trachomatis serovar L2 (strain ATCC VR-902B / DSM 19102 / 434/Bu) protein is 1-deoxy-D-xylulose 5-phosphate reductoisomerase.